Consider the following 358-residue polypeptide: Uroporphyrinogen decarboxylase (358 aa).

Residues 36–40, Asp-85, Tyr-160, Ser-215, and His-338 contribute to the substrate site; that span reads RQAGR.

This sequence belongs to the uroporphyrinogen decarboxylase family. As to quaternary structure, homodimer.

The protein localises to the cytoplasm. It carries out the reaction uroporphyrinogen III + 4 H(+) = coproporphyrinogen III + 4 CO2. Its pathway is porphyrin-containing compound metabolism; protoporphyrin-IX biosynthesis; coproporphyrinogen-III from 5-aminolevulinate: step 4/4. Catalyzes the decarboxylation of four acetate groups of uroporphyrinogen-III to yield coproporphyrinogen-III. This Corynebacterium glutamicum (strain ATCC 13032 / DSM 20300 / JCM 1318 / BCRC 11384 / CCUG 27702 / LMG 3730 / NBRC 12168 / NCIMB 10025 / NRRL B-2784 / 534) protein is Uroporphyrinogen decarboxylase.